The following is a 502-amino-acid chain: Actin-binding protein WASF3 (502 aa).

Residues Asn-57–Gln-93 adopt a coiled-coil conformation. Tyr-151 carries the post-translational modification Phosphotyrosine; by ABL1. Residues Lys-162–Asn-206 are a coiled coil. Disordered stretches follow at residues Thr-169–Tyr-210 and Ser-223–Asp-443. Positions Gln-182 to Val-192 are enriched in basic and acidic residues. Polar residues predominate over residues Ser-223 to Asp-237. Tyr-248 is subject to Phosphotyrosine; by ABL1. Residues Gln-302 to Ala-312 are compositionally biased toward pro residues. A Phosphotyrosine; by ABL1 modification is found at Tyr-337. Pro residues-rich tracts occupy residues Ser-341 to Ile-352 and Ala-394 to Pro-410. The segment covering Gly-411–Pro-423 has biased composition (low complexity). Residues Ala-440–Val-457 form the WH2 domain. Tyr-486 carries the post-translational modification Phosphotyrosine; by ABL1.

The protein belongs to the SCAR/WAVE family. In terms of assembly, binds actin and the Arp2/3 complex. In terms of processing, phosphorylation by ABL1 promotes lamellipodia formation and cell migration. Expressed in ovary and brain.

It is found in the cytoplasm. The protein localises to the cytoskeleton. Downstream effector molecules involved in the transmission of signals from tyrosine kinase receptors and small GTPases to the actin cytoskeleton. Plays a role in the regulation of cell morphology and cytoskeletal organization. Required in the control of cell shape. The protein is Actin-binding protein WASF3 (WASF3) of Homo sapiens (Human).